Consider the following 132-residue polypeptide: Small ribosomal subunit protein uS9 (132 aa).

Belongs to the universal ribosomal protein uS9 family.

The protein is Small ribosomal subunit protein uS9 of Leptospira interrogans serogroup Icterohaemorrhagiae serovar copenhageni (strain Fiocruz L1-130).